We begin with the raw amino-acid sequence, 83 residues long: Cell division topological specificity factor (83 aa).

This sequence belongs to the MinE family.

Prevents the cell division inhibition by proteins MinC and MinD at internal division sites while permitting inhibition at polar sites. This ensures cell division at the proper site by restricting the formation of a division septum at the midpoint of the long axis of the cell. In Buchnera aphidicola subsp. Acyrthosiphon pisum (strain 5A), this protein is Cell division topological specificity factor.